Here is a 382-residue protein sequence, read N- to C-terminus: Guanylate kinase 1 (382 aa).

One can recognise a Guanylate kinase-like domain in the interval 128 to 310 (QKPIVISGPS…CYENLKKLLS (183 aa)). 135–142 (GPSGVGKG) contributes to the ATP binding site. Active-site residues include Arg-168, Arg-261, and Arg-272. Positions 295 and 296 each coordinate ATP.

The protein belongs to the guanylate kinase family. As to quaternary structure, monomer.

Its subcellular location is the cytoplasm. The protein localises to the nucleus. It carries out the reaction GMP + ATP = GDP + ADP. Its function is as follows. Essential for recycling GMP and indirectly, cGMP. The chain is Guanylate kinase 1 (GK1) from Oryza sativa subsp. japonica (Rice).